The following is a 317-amino-acid chain: Protoheme IX farnesyltransferase (317 aa).

9 helical membrane-spanning segments follow: residues 39-58, 62-84, 100-120, 123-143, 160-180, 184-204, 233-253, 256-276, and 293-313; these read VMSLVVFTGLIGMLVAPGSL, LGAIAILCIAVATGASGAINMWY, IPAGRIEPGEALGYGIVLAVG, LVMWLATNVVAAAVLAFAIFF, IVIGGAAGAFPPVIGWAAVTG, LMPVMMFAIVFFWTPPHFWSL, IMAYTVLLSVIAVLPWALGDT, VYGLSAVVLSLGFLVQSWRVL, and ARAAFKYSLIYLAVLFLALAV.

It belongs to the UbiA prenyltransferase family. Protoheme IX farnesyltransferase subfamily.

Its subcellular location is the cell inner membrane. It catalyses the reaction heme b + (2E,6E)-farnesyl diphosphate + H2O = Fe(II)-heme o + diphosphate. It functions in the pathway porphyrin-containing compound metabolism; heme O biosynthesis; heme O from protoheme: step 1/1. Converts heme B (protoheme IX) to heme O by substitution of the vinyl group on carbon 2 of heme B porphyrin ring with a hydroxyethyl farnesyl side group. The chain is Protoheme IX farnesyltransferase from Granulibacter bethesdensis (strain ATCC BAA-1260 / CGDNIH1).